Reading from the N-terminus, the 199-residue chain is MKLVLASNNRGKLAELQSMFSPLGVELVRQADLGVGEADEPFHTFVENALAKARFAAEHTGLPALADDAGLCVDAFGGQPGVQTAYYATRFGYEKGDANNVRALLEQMRGVASRRAAMVSTLVAVRSPDDPEPLIAVGRVVGEIATEPRGDGGFGFDPVMFIPEFGKTFAELPVEVKNAHSHRGRSAQQMLALMRERWF.

A substrate-binding site is contributed by 7–12; that stretch reads SNNRGK. Mg(2+) contacts are provided by Asp-39 and Asp-68. Asp-68 functions as the Proton acceptor in the catalytic mechanism. Substrate-binding positions include Ala-69, 154–157, Lys-177, and 182–183; these read FGFD and HR.

The protein belongs to the HAM1 NTPase family. As to quaternary structure, homodimer. The cofactor is Mg(2+).

The catalysed reaction is XTP + H2O = XMP + diphosphate + H(+). The enzyme catalyses dITP + H2O = dIMP + diphosphate + H(+). It catalyses the reaction ITP + H2O = IMP + diphosphate + H(+). Pyrophosphatase that catalyzes the hydrolysis of nucleoside triphosphates to their monophosphate derivatives, with a high preference for the non-canonical purine nucleotides XTP (xanthosine triphosphate), dITP (deoxyinosine triphosphate) and ITP. Seems to function as a house-cleaning enzyme that removes non-canonical purine nucleotides from the nucleotide pool, thus preventing their incorporation into DNA/RNA and avoiding chromosomal lesions. This is dITP/XTP pyrophosphatase from Paracidovorax citrulli (strain AAC00-1) (Acidovorax citrulli).